A 264-amino-acid chain; its full sequence is Thymidylate synthase (264 aa).

Position 21 (Arg-21) interacts with dUMP. His-51 serves as a coordination point for (6R)-5,10-methylene-5,6,7,8-tetrahydrofolate. 126 to 127 (RR) is a dUMP binding site. Cys-146 serves as the catalytic Nucleophile. Residues 166–169 (RSAD), Asn-177, and 207–209 (HLY) contribute to the dUMP site. Asp-169 contacts (6R)-5,10-methylene-5,6,7,8-tetrahydrofolate. Residue Ala-263 coordinates (6R)-5,10-methylene-5,6,7,8-tetrahydrofolate.

It belongs to the thymidylate synthase family. Bacterial-type ThyA subfamily. As to quaternary structure, homodimer.

It is found in the cytoplasm. The enzyme catalyses dUMP + (6R)-5,10-methylene-5,6,7,8-tetrahydrofolate = 7,8-dihydrofolate + dTMP. The protein operates within pyrimidine metabolism; dTTP biosynthesis. In terms of biological role, catalyzes the reductive methylation of 2'-deoxyuridine-5'-monophosphate (dUMP) to 2'-deoxythymidine-5'-monophosphate (dTMP) while utilizing 5,10-methylenetetrahydrofolate (mTHF) as the methyl donor and reductant in the reaction, yielding dihydrofolate (DHF) as a by-product. This enzymatic reaction provides an intracellular de novo source of dTMP, an essential precursor for DNA biosynthesis. The protein is Thymidylate synthase of Cupriavidus necator (strain ATCC 17699 / DSM 428 / KCTC 22496 / NCIMB 10442 / H16 / Stanier 337) (Ralstonia eutropha).